The following is a 485-amino-acid chain: Bifunctional protein HldE (485 aa).

Residues 1 to 326 (MDFSSTRVLC…AELDESAISN (326 aa)) form a ribokinase region. ATP is bound at residue 195–198 (NVKE). Asp271 is a catalytic residue. A cytidylyltransferase region spans residues 354-485 (FTNGCFDILH…GIVKKISTLT (132 aa)).

The protein in the N-terminal section; belongs to the carbohydrate kinase PfkB family. It in the C-terminal section; belongs to the cytidylyltransferase family. In terms of assembly, homodimer.

It catalyses the reaction D-glycero-beta-D-manno-heptose 7-phosphate + ATP = D-glycero-beta-D-manno-heptose 1,7-bisphosphate + ADP + H(+). The enzyme catalyses D-glycero-beta-D-manno-heptose 1-phosphate + ATP + H(+) = ADP-D-glycero-beta-D-manno-heptose + diphosphate. It functions in the pathway nucleotide-sugar biosynthesis; ADP-L-glycero-beta-D-manno-heptose biosynthesis; ADP-L-glycero-beta-D-manno-heptose from D-glycero-beta-D-manno-heptose 7-phosphate: step 1/4. The protein operates within nucleotide-sugar biosynthesis; ADP-L-glycero-beta-D-manno-heptose biosynthesis; ADP-L-glycero-beta-D-manno-heptose from D-glycero-beta-D-manno-heptose 7-phosphate: step 3/4. In terms of biological role, catalyzes the phosphorylation of D-glycero-D-manno-heptose 7-phosphate at the C-1 position to selectively form D-glycero-beta-D-manno-heptose-1,7-bisphosphate. Functionally, catalyzes the ADP transfer from ATP to D-glycero-beta-D-manno-heptose 1-phosphate, yielding ADP-D-glycero-beta-D-manno-heptose. The polypeptide is Bifunctional protein HldE (Granulibacter bethesdensis (strain ATCC BAA-1260 / CGDNIH1)).